A 422-amino-acid chain; its full sequence is Nucleoside transporter 1 (422 aa).

Residues 1-38 lie on the Cytoplasmic side of the membrane; the sequence is MSTGKESSKAYADIESRGDYKDDGKKGSTLSSKQHFML. A helical membrane pass occupies residues 39–59; it reads SLTFILIGLSSLNVWNTALGL. An inosine-binding site is contributed by W53. Over 60–63 the chain is Extracellular; that stretch reads NINF. A helical membrane pass occupies residues 64–82; the sequence is KYNTFQITGLVCSSIVALF. Residues 83 to 87 are Cytoplasmic-facing; the sequence is VEIPK. Residues 88-107 traverse the membrane as a helical segment; sequence IMLPFLLGGLSILCAGFQIS. At 108–116 the chain is on the extracellular side; that stretch reads HSFFTDTQF. The chain crosses the membrane as a helical span at residues 117-139; that stretch reads DTYCLVAFIVIGVVAGLAQTIAF. An inosine-binding site is contributed by Q135. Topologically, residues 140 to 149 are cytoplasmic; it reads NIGSTMEDNM. The helical transmembrane segment at 150-174 threads the bilayer; the sequence is GGYMSAGIGISGVFIFVINLLLDQF. Topologically, residues 175–185 are extracellular; it reads VSPEKHYGVNK. Residues 186–208 traverse the membrane as a helical segment; it reads AKLLYLYIICELCLILAIVFCVC. The Cytoplasmic portion of the chain corresponds to 209 to 241; that stretch reads NLDLTNKNNKKDEENKENNATLSYMELFKDSYK. The chain crosses the membrane as a helical span at residues 242-265; it reads AILTMFLVNWLTLQLFPGVGHKKW. Residues 266 to 274 are Extracellular-facing; that stretch reads QESHNISDY. A helical membrane pass occupies residues 275–294; sequence NVTIIVGMFQVFDFLSRYPP. Residues D287 and R291 each coordinate inosine. At 295–309 the chain is on the cytoplasmic side; that stretch reads NLTHIKIFKNFTFSL. The helical transmembrane segment at 310 to 330 threads the bilayer; that stretch reads NKLLVANSLRLLFIPWFILNA. Over 331–338 the chain is Extracellular; the sequence is CVDHPFFK. Residues 339-362 form a helical membrane-spanning segment; the sequence is NIVQQCVCMAMLAFTNGWFNTVPF. Residues 363 to 374 lie on the Cytoplasmic side of the membrane; the sequence is LVFVKELKKAKK. A helical membrane pass occupies residues 375-397; that stretch reads KKEIEIISTFLVIAMFVGLFCGI. The Extracellular portion of the chain corresponds to 398 to 422; that stretch reads WTTYIYNLFNIVLPKPDLPPIDVTQ.

Belongs to the SLC29A/ENT transporter (TC 2.A.57) family.

The protein localises to the cell membrane. It carries out the reaction inosine(in) = inosine(out). The catalysed reaction is adenosine(in) = adenosine(out). It catalyses the reaction hypoxanthine(out) = hypoxanthine(in). The enzyme catalyses guanosine(in) = guanosine(out). It carries out the reaction guanine(out) = guanine(in). The catalysed reaction is thymidine(in) = thymidine(out). It catalyses the reaction uridine(out) = uridine(in). The enzyme catalyses uracil(in) = uracil(out). It carries out the reaction thymine(out) = thymine(in). The catalysed reaction is adenine(out) = adenine(in). It catalyses the reaction cytosine(out) = cytosine(in). The enzyme catalyses xanthine(out) = xanthine(in). GSK4 (5-methyl-N-[2-(2-oxo-1-azepanyl)ethyl]-2-phenyl-1,3-oxazole-4-carbox-amide) disrupts the transport activity at 500 nM. Inhibited partially by 10 uM dipyridamole. Inhibited partially by N,N'-1,3-benzothiazole-2,6-diyldi(2-furamide), 2-bromo-N-(4-[1,3]oxazolo[4,5-b]pyridin-2-ylphenyl)benzamide, 4-methyl-7-[(3,4,5-trimethoxybenzyl)oxy]-2H-chromen-2-one, 2-(1-methyl-1H-indol-3-yl)-2-oxo-N-[4-(pyrrolidin-1-ylcarbonyl)phenyl]acet amide and 2-[2-(2-methylphenyl)vinyl]-4(3H)-quinazolinone. In terms of biological role, sodium-independent nucleoside and nucleobase transporter with a broad substrate specificity. Plays a key role in the utilization of host purine sources by P.falciparum during intraerythrocytic development enabling parasite growth in the presence of physiological concentrations of adenosine, inosine, guanine, guanosine, xanthine and hypoxanthine. Essential for parasite transition from ring to trophozoite or from trophozoite to schizont stage but not for erythrocyte invasion by merozoites. This Plasmodium falciparum (isolate 3D7) protein is Nucleoside transporter 1.